The primary structure comprises 184 residues: ATP synthase subunit b, chloroplastic (184 aa).

The helical transmembrane segment at 27–49 (LATNPINLSVVFGVLIFFGKGVL) threads the bilayer.

Belongs to the ATPase B chain family. As to quaternary structure, F-type ATPases have 2 components, F(1) - the catalytic core - and F(0) - the membrane proton channel. F(1) has five subunits: alpha(3), beta(3), gamma(1), delta(1), epsilon(1). F(0) has four main subunits: a(1), b(1), b'(1) and c(10-14). The alpha and beta chains form an alternating ring which encloses part of the gamma chain. F(1) is attached to F(0) by a central stalk formed by the gamma and epsilon chains, while a peripheral stalk is formed by the delta, b and b' chains.

The protein localises to the plastid. Its subcellular location is the chloroplast thylakoid membrane. Functionally, f(1)F(0) ATP synthase produces ATP from ADP in the presence of a proton or sodium gradient. F-type ATPases consist of two structural domains, F(1) containing the extramembraneous catalytic core and F(0) containing the membrane proton channel, linked together by a central stalk and a peripheral stalk. During catalysis, ATP synthesis in the catalytic domain of F(1) is coupled via a rotary mechanism of the central stalk subunits to proton translocation. In terms of biological role, component of the F(0) channel, it forms part of the peripheral stalk, linking F(1) to F(0). This chain is ATP synthase subunit b, chloroplastic, found in Crucihimalaya wallichii (Rock-cress).